A 572-amino-acid chain; its full sequence is Formate--tetrahydrofolate ligase (572 aa).

Residue 81-88 coordinates ATP; that stretch reads TPAGEGKT.

Belongs to the formate--tetrahydrofolate ligase family.

The catalysed reaction is (6S)-5,6,7,8-tetrahydrofolate + formate + ATP = (6R)-10-formyltetrahydrofolate + ADP + phosphate. Its pathway is one-carbon metabolism; tetrahydrofolate interconversion. This chain is Formate--tetrahydrofolate ligase, found in Granulibacter bethesdensis (strain ATCC BAA-1260 / CGDNIH1).